Consider the following 1032-residue polypeptide: Connector enhancer of kinase suppressor of ras 2 (1032 aa).

Positions 11-76 constitute an SAM domain; it reads WSPSQVVDWM…LEAVDLLCAL (66 aa). A Phosphoserine modification is found at S12. The region spanning 84 to 178 is the CRIC domain; it reads NLKTLSHKLN…TIVQQDCTVY (95 aa). The PDZ domain occupies 215-297; it reads VIQLANIKPS…GVILTLKKRP (83 aa). The region spanning 302 to 515 is the DUF1170 domain; the sequence is TSAPALLKNM…PAHYSLLPSL (214 aa). The span at 324–340 shows a compositional bias: low complexity; sequence RSPTSSVATPSSTISTP. The disordered stretch occupies residues 324-349; that stretch reads RSPTSSVATPSSTISTPTKRDSSALQ. A phosphoserine mark is found at S338 and S390. Disordered regions lie at residues 480 to 509 and 538 to 558; these read EEYM…PAHY and FQQS…ISGK. The span at 545 to 558 shows a compositional bias: basic residues; that stretch reads HKSKKKNKGAISGK. Residues 570 to 669 enclose the PH domain; the sequence is RGDCEGWLWK…WLNRINMLTA (100 aa). The interval 682–766 is disordered; that stretch reads DYWSESDKEE…PIRKTASQRR (85 aa). Y683 is subject to Phosphotyrosine. Acidic residues predominate over residues 683–693; that stretch reads YWSESDKEEAD. A phosphoserine mark is found at S685 and S687. The segment covering 701–714 has biased composition (pro residues); that stretch reads DSPPPPYDTYPRPP. The segment covering 730-740 has biased composition (low complexity); it reads LSSTETSQSQS. Phosphoserine occurs at positions 756 and 767. The tract at residues 864 to 900 is disordered; that stretch reads ACDPQDDIQPPEVEEEEEEEEEEAAGENVGEKNENRE. The stretch at 874–917 forms a coiled coil; sequence PEVEEEEEEEEEEAAGENVGEKNENREEKLGDSLQDLYRALEEA. Acidic residues predominate over residues 875–888; sequence EVEEEEEEEEEEAA. Position 906 is a phosphoserine (S906).

This sequence belongs to the CNKSR family. As to quaternary structure, interacts with RAF1, RAB2L and RAL GTPase proteins. In terms of processing, phosphorylated on tyrosine.

The protein resides in the cytoplasm. Its subcellular location is the membrane. Functionally, may function as an adapter protein or regulator of Ras signaling pathways. In Mus musculus (Mouse), this protein is Connector enhancer of kinase suppressor of ras 2 (Cnksr2).